The following is a 193-amino-acid chain: NADH-quinone oxidoreductase subunit B (193 aa).

Cys-72, Cys-73, Cys-137, and Cys-167 together coordinate [4Fe-4S] cluster.

The protein belongs to the complex I 20 kDa subunit family. NDH-1 is composed of 14 different subunits. Subunits NuoB, C, D, E, F, and G constitute the peripheral sector of the complex. [4Fe-4S] cluster serves as cofactor.

It is found in the cell inner membrane. It carries out the reaction a quinone + NADH + 5 H(+)(in) = a quinol + NAD(+) + 4 H(+)(out). In terms of biological role, NDH-1 shuttles electrons from NADH, via FMN and iron-sulfur (Fe-S) centers, to quinones in the respiratory chain. The immediate electron acceptor for the enzyme in this species is believed to be ubiquinone. Couples the redox reaction to proton translocation (for every two electrons transferred, four hydrogen ions are translocated across the cytoplasmic membrane), and thus conserves the redox energy in a proton gradient. This Bartonella henselae (strain ATCC 49882 / DSM 28221 / CCUG 30454 / Houston 1) (Rochalimaea henselae) protein is NADH-quinone oxidoreductase subunit B.